Consider the following 548-residue polypeptide: MFCFQCQETAKNQGCTVKGVCGKPEETADLQDLLIYVCKGIAIYGEALNAAGTLDREAAHFICRALFTTITNVAWDDDVLVDRIKEGLAVRDAVKAKAGEAVSGSLPDCATWASEDKAAIMAKALSDEVRITTMANEDVRSLRELLILGCKGVAAYTDHAAILGYEKDDIYAFLMEALASTTKELSVDDMIGLVMKAGETAVAAMALLDEANTATYGHPEITEVNIGVGKNPGILISGHDLKDMEELLRQTEGTGVDVYTHGEMLPANYYPAFKKYSHFIGNYGGSWWHQNKDFESFNGAILLTTNCLIPIKGDNTYKDRLFTTGVVNYPGAAHIGDRPDGGAKDFSPIIERAKTCAPPTEIETGTIVGGFAHHQVLALADKVVDAVKSGAIKRFVVMAGCDGRMKSRSYFTEVAEALPKDTVILTAGCAKYRYNKLNLGDIGGIPRVLDAGQCNDSYSLAVIALKLKEVFGLADINDLPISYDIAWYEQKAVAVLLALLFLGVKGIRLGPTLPAFLSPTVAGVLVDKFDIKPIGTVADDVAAMMAGK.

Residues cysteine 3, cysteine 6, cysteine 15, and cysteine 21 each coordinate [4Fe-4S] cluster. The hybrid [4Fe-2O-2S] cluster site is built by histidine 239, glutamate 263, cysteine 307, cysteine 401, cysteine 429, cysteine 454, glutamate 489, and lysine 491. Cysteine 401 carries the post-translational modification Cysteine persulfide.

Belongs to the HCP family. [4Fe-4S] cluster serves as cofactor. The cofactor is hybrid [4Fe-2O-2S] cluster.

The protein localises to the cytoplasm. The enzyme catalyses A + NH4(+) + H2O = hydroxylamine + AH2 + H(+). Catalyzes the reduction of hydroxylamine to form NH(3) and H(2)O. This Desulfosudis oleivorans (strain DSM 6200 / JCM 39069 / Hxd3) (Desulfococcus oleovorans) protein is Hydroxylamine reductase.